The following is a 677-amino-acid chain: MTQVAKKILVTCALPYANGSIHLGHMLEHIQADVWVRYQRMRGHQVNFICADDAHGTPIMLKAQQLGISPEQMITEMSQEHQTDFAGFDISYDNYHSTHSDENRELSELIYTRLKENGFIKNRTISQLFDPEKGMFLPDRFVKGTCPKCKSPDQYGDNCEVCGATYSPTELIEPKSVVSGATPVMRDSEHFFFDLPSFSEMLQAWTRSGALQEQVANKMQEWFESGLQQWDISRDAPYFGFEIPDAPGKYFYVWLDAPIGYMGSFKNLCDKRGDTTSFDEYWKKDSDAELYHFIGKDIVYFHSLFWPAMLEGSGFRKPTNLFVHGYVTVNGAKMSKSRGTFIKASTWLNHFDADSLRYYYTAKLSSRIDDIDLNLEDFVQRVNADIVNKVVNLASRNAGFIGKRFDGVMAAELADPALYKTFTDAATAIGEAWEAREFGKAVREIMALADLANRYVDEQAPWVVAKQEGRDADLQAICSMGINLFRVLMTYLKPVLPTLSERAEAFLNTELTWDAIQQPLLSHKVNTFKALYNRIEMKQVEALVEASKEEVKAAAAPVTGPLADEPIQETITFDDFAKVDLRVALIENAEFVEGSDKLLRLTLDLGGEKRNVFSGIRSAYPDPQVLIGRQTVMVANLAPRKMRFGISEGMVMAAGPGGKDIFLLSPDEGAKPGQQVK.

The 'HIGH' region signature appears at 15–25 (PYANGSIHLGH). Cysteine 146, cysteine 149, cysteine 159, and cysteine 162 together coordinate Zn(2+). Residues 333 to 337 (KMSKS) carry the 'KMSKS' region motif. Lysine 336 provides a ligand contact to ATP. A tRNA-binding domain is found at 575 to 677 (DFAKVDLRVA…EGAKPGQQVK (103 aa)).

The protein belongs to the class-I aminoacyl-tRNA synthetase family. MetG type 1 subfamily. In terms of assembly, homodimer. It depends on Zn(2+) as a cofactor.

It localises to the cytoplasm. It carries out the reaction tRNA(Met) + L-methionine + ATP = L-methionyl-tRNA(Met) + AMP + diphosphate. In terms of biological role, is required not only for elongation of protein synthesis but also for the initiation of all mRNA translation through initiator tRNA(fMet) aminoacylation. In Enterobacter sp. (strain 638), this protein is Methionine--tRNA ligase.